Here is a 367-residue protein sequence, read N- to C-terminus: Cell-death-related nuclease 7 (367 aa).

An N-terminal signal peptide occupies residues 1–18 (MRLYFVLIFSVIFTTGNG). A glycan (N-linked (GlcNAc...) asparagine) is linked at asparagine 253.

This sequence belongs to the DNase II family.

This is Cell-death-related nuclease 7 (crn-7) from Caenorhabditis elegans.